A 949-amino-acid chain; its full sequence is RNA polymerase-associated protein RapA (949 aa).

In terms of domain architecture, Helicase ATP-binding spans Glu164 to Asn332. An ATP-binding site is contributed by Asp177–Thr184. The DEAH box motif lies at Asp278–His281. Positions Arg474–His628 constitute a Helicase C-terminal domain.

Belongs to the SNF2/RAD54 helicase family. RapA subfamily. In terms of assembly, interacts with the RNAP. Has a higher affinity for the core RNAP than for the holoenzyme. Its ATPase activity is stimulated by binding to RNAP.

Transcription regulator that activates transcription by stimulating RNA polymerase (RNAP) recycling in case of stress conditions such as supercoiled DNA or high salt concentrations. Probably acts by releasing the RNAP, when it is trapped or immobilized on tightly supercoiled DNA. Does not activate transcription on linear DNA. Probably not involved in DNA repair. The chain is RNA polymerase-associated protein RapA from Stutzerimonas stutzeri (strain A1501) (Pseudomonas stutzeri).